The following is a 146-amino-acid chain: Hemoglobin subunit beta-2 (146 aa).

Val1 carries the N-acetylvaline modification. The Globin domain maps to 2-146; that stretch reads HLHGDEKAAV…VASALAHKYH (145 aa). Lys17 bears the N6-succinyllysine mark. Ser44 is modified (phosphoserine). Position 59 is an N6-succinyllysine (Lys59). Heme b is bound by residues His63 and His92. An Asymmetric dimethylarginine modification is found at Arg104. Position 123 is a phosphothreonine (Thr123).

Belongs to the globin family. As to quaternary structure, heterotetramer of two alpha chains and two beta chains. In terms of tissue distribution, red blood cells.

Involved in oxygen transport from the lung to the various peripheral tissues. The polypeptide is Hemoglobin subunit beta-2 (HBB2) (Tapirus terrestris (Lowland tapir)).